Here is a 318-residue protein sequence, read N- to C-terminus: Olfactory receptor 5G25 (318 aa).

Topologically, residues 1 to 25 (MMHRNQTVVTEFFFTGLTSSFHLQI) are extracellular. Asn-5 is a glycosylation site (N-linked (GlcNAc...) asparagine). The helical transmembrane segment at 26–46 (VLFLTFLCVYLATLLGNLGMI) threads the bilayer. Residues 47 to 54 (ILIHQDTR) are Cytoplasmic-facing. A helical membrane pass occupies residues 55–75 (LHIPMYFFLSHLSFVDACSSS). Residues 76–99 (VISPKMLSDIFVDKKVISFLGCAI) lie on the Extracellular side of the membrane. A disulfide bond links Cys-97 and Cys-189. The chain crosses the membrane as a helical span at residues 100–120 (QFCLFSQFVVTECFLLASMAY). Topologically, residues 121–133 (DRYVAICKPLLYT) are cytoplasmic. A helical transmembrane segment spans residues 134–154 (LIMSQRVCVQLVIGPYSIGLI). Residues 155–196 (STVVHTTSAFILPYCGPNLINHFFCDLLPVLSLACADTQMNK) are Extracellular-facing. The chain crosses the membrane as a helical span at residues 197–217 (HLLFIMAGILGVFSGIIILVS). At 218 to 237 (YVYIAITILKINSADGRRKA) the chain is on the cytoplasmic side. A helical membrane pass occupies residues 238 to 258 (FSTCSSHLTAVSILYGTLFFI). Topologically, residues 259–271 (YVRPSSSFSLDIN) are extracellular. The helical transmembrane segment at 272–292 (KVVSLFYTAVIPMLNPFIYSL) threads the bilayer. Over 293 to 318 (RNKEVKDALIRTFEKKFCYSLQDKIL) the chain is Cytoplasmic.

The protein belongs to the G-protein coupled receptor 1 family.

Its subcellular location is the cell membrane. Functionally, potential odorant receptor. This Mus musculus (Mouse) protein is Olfactory receptor 5G25.